A 181-amino-acid chain; its full sequence is Adenine phosphoribosyltransferase (181 aa).

This sequence belongs to the purine/pyrimidine phosphoribosyltransferase family. As to quaternary structure, homodimer.

It is found in the cytoplasm. It carries out the reaction AMP + diphosphate = 5-phospho-alpha-D-ribose 1-diphosphate + adenine. It functions in the pathway purine metabolism; AMP biosynthesis via salvage pathway; AMP from adenine: step 1/1. Its function is as follows. Catalyzes a salvage reaction resulting in the formation of AMP, that is energically less costly than de novo synthesis. The protein is Adenine phosphoribosyltransferase of Aeromonas salmonicida (strain A449).